The following is a 280-amino-acid chain: Diaminopimelate epimerase (280 aa).

Positions 14 and 67 each coordinate substrate. Residue cysteine 76 is the Proton donor of the active site. Substrate is bound by residues 77–78 (GN), asparagine 193, and 210–211 (ER). The active-site Proton acceptor is the cysteine 220. Residue 221 to 222 (GT) coordinates substrate.

This sequence belongs to the diaminopimelate epimerase family. As to quaternary structure, homodimer.

It is found in the cytoplasm. It catalyses the reaction (2S,6S)-2,6-diaminopimelate = meso-2,6-diaminopimelate. It participates in amino-acid biosynthesis; L-lysine biosynthesis via DAP pathway; DL-2,6-diaminopimelate from LL-2,6-diaminopimelate: step 1/1. Its function is as follows. Catalyzes the stereoinversion of LL-2,6-diaminopimelate (L,L-DAP) to meso-diaminopimelate (meso-DAP), a precursor of L-lysine. The protein is Diaminopimelate epimerase of Methanocella arvoryzae (strain DSM 22066 / NBRC 105507 / MRE50).